The sequence spans 146 residues: Protein beta (146 aa).

The polypeptide is Protein beta (Adelaide River virus (ARV)).